Consider the following 192-residue polypeptide: Lipid A acyltransferase PagP (192 aa).

An N-terminal signal peptide occupies residues 1–24 (MWLRFCAPALMAWYWVFFPSTSQA). Active-site residues include His63, Asp106, and Ser107.

The protein belongs to the lipid A palmitoyltransferase family. Homodimer.

The protein resides in the cell outer membrane. The enzyme catalyses a lipid A + a 1,2-diacyl-sn-glycero-3-phosphocholine = a hepta-acyl lipid A + a 2-acyl-sn-glycero-3-phosphocholine. The catalysed reaction is a lipid IVA + a 1,2-diacyl-sn-glycero-3-phosphocholine = a lipid IVB + a 2-acyl-sn-glycero-3-phosphocholine. It carries out the reaction a lipid IIA + a 1,2-diacyl-sn-glycero-3-phosphocholine = a lipid IIB + a 2-acyl-sn-glycero-3-phosphocholine. In terms of biological role, transfers a fatty acid residue from the sn-1 position of a phospholipid to the N-linked hydroxyfatty acid chain on the proximal unit of lipid A or its precursors. In Musicola paradisiaca (strain Ech703) (Dickeya paradisiaca), this protein is Lipid A acyltransferase PagP.